The sequence spans 144 residues: Cytochrome c-type biogenesis protein CcmE (144 aa).

Residues 1 to 7 (MKPRHKR) are Cytoplasmic-facing. A helical; Signal-anchor for type II membrane protein transmembrane segment spans residues 8–28 (ALIIIAALIAIGVAALLILNA). The Periplasmic portion of the chain corresponds to 29-144 (LNSNIALYVT…DQAQKNGSAK (116 aa)). Heme-binding residues include His121 and Tyr125.

This sequence belongs to the CcmE/CycJ family.

It is found in the cell inner membrane. In terms of biological role, heme chaperone required for the biogenesis of c-type cytochromes. Transiently binds heme delivered by CcmC and transfers the heme to apo-cytochromes in a process facilitated by CcmF and CcmH. The sequence is that of Cytochrome c-type biogenesis protein CcmE from Polynucleobacter necessarius subsp. necessarius (strain STIR1).